Here is a 436-residue protein sequence, read N- to C-terminus: Probable ABC transporter binding protein NosD (436 aa).

Residues 1-27 (MFKAQATFSRYSAAVSLLLLFSGAAQA) form the signal peptide. PbH1 repeat units lie at residues 85 to 113 (APDVLVEGCTLYEWGSDLTAMDSAVFILP), 115 to 136 (AERAQISNNRMRGPGFGVFVDG), 137 to 166 (TRDVQVIGNEIDGDAGVRSQDRGNGIHLFA), 167 to 188 (VSGARVLHNHVRNARDGIYIDT), 189 to 210 (SNGNHLEGNVIEDVRYGVHYMF), 233 to 255 (SRKLTVTGNRSEQDQNYGILMNY), 293 to 314 (SLFNTIENNHFEKSSLGIHLTA), and 316 to 354 (SEDNRISGNAFVGNQQQVKYVASRTQEWSVDGRGNYWSD).

This sequence belongs to the NosD family. In terms of assembly, the complex may be composed of an ATP-binding protein (NosF), a transmembrane protein (NosY) and a solute-binding protein (NosD).

The protein resides in the periplasm. Required for the assembly of the copper chromophores of nitrous oxide reductase. Could be part of the ABC transporter complex NosDFY. The sequence is that of Probable ABC transporter binding protein NosD from Stutzerimonas stutzeri (Pseudomonas stutzeri).